The following is a 988-amino-acid chain: Chloride channel protein 1 (988 aa).

Topologically, residues 1–118 (MEQSRSQQRG…VVRRKLGEDG (118 aa)) are cytoplasmic. Basic and acidic residues predominate over residues 65-75 (HKEQFSDREQD). The disordered stretch occupies residues 65–92 (HKEQFSDREQDIGMPKKTGSSSTVDSKD). The chain crosses the membrane as a helical span at residues 119 to 150 (IFLVLLGLLMALVSWSMDYVSAKSLQAYKWSY). Residues 151–158 (AQMQPSLP) lie on the Extracellular side of the membrane. A helical membrane pass occupies residues 159 to 179 (LQFLVWVTFPLVLILFSALFC). Residues 180–183 (HLIS) lie on the Cytoplasmic side of the membrane. The note=Loop between two helices intramembrane region spans 184–189 (PQAVGS). A Selectivity filter part_1 motif is present at residues 188–192 (GSGIP). Chloride is bound at residue Ser-189. The helical intramembrane region spans 190–195 (GIPEMK). Residues 196 to 208 (TILRGVVLKEYLT) lie on the Cytoplasmic side of the membrane. An intramembrane region (helical) is located at residues 209 to 224 (MKAFVAKVVALTAGLG). Positions 225-230 (SGIPVG) form an intramembrane region, note=Loop between two helices. Residues 230–234 (GKEGP) carry the Selectivity filter part_2 motif. An intramembrane region (helical) is located at residues 231-246 (KEGPFVHIASICAAVL). Residues 247–268 (SKFMSVFCGVYEQPYYYSDILT) are Cytoplasmic-facing. 2 intramembrane regions (helical) span residues 269–280 (VGCAVGVGCCFG) and 281–290 (TPLGGVLFSI). Topologically, residues 291-301 (EVTSTYFAVRN) are cytoplasmic. The chain crosses the membrane as a helical span at residues 302–321 (YWRGFFAATFSAFVFRVLAV). The Extracellular portion of the chain corresponds to 322–347 (WNKDAVTITALFRTNFRMDFPFDLKE). A helical membrane pass occupies residues 348–376 (LPAFAAIGICCGLLGAVFVYLHRQVMLGV). The Cytoplasmic segment spans residues 377–390 (RKHKALSQFLAKHR). The helical transmembrane segment at 391–408 (LLYPGIVTFVIASFTFPP) threads the bilayer. Residues 409–414 (GMGQFM) are Extracellular-facing. The segment at residues 415-418 (AGEL) is an intramembrane region (note=Loop between two helices). An intramembrane region (helical) is located at residues 419 to 426 (MPREAIST). At 427 to 457 (LFDNNTWVKHAGDPESLGQSAVWIHPRVNVV) the chain is on the extracellular side. The segment at residues 458 to 475 (IIIFLFFVMKFWMSIVAT) is an intramembrane region (helical). An intramembrane region (note=Loop between two helices) is located at residues 476-482 (TMPIPCG). The Selectivity filter part_3 motif lies at 482–486 (GGFMP). The segment at residues 483–498 (GFMPVFVLGAAFGRLV) is an intramembrane region (helical). Residue Phe-484 coordinates chloride. The Extracellular segment spans residues 499-521 (GEIMAMLFPDGILFDDIIYKILP). An intramembrane region (helical) is located at residues 522–538 (GGYAVIGAAALTGAVSH). An intramembrane region (note=Loop between two helices) is located at residues 539–540 (TV). The helical intramembrane region spans 541–554 (STAVICFELTGQIA). Topologically, residues 555–557 (HIL) are extracellular. The helical intramembrane region spans 558–571 (PMMVAVILANMVAQ). The note=Loop between two helices intramembrane region spans 572–575 (SLQP). Residues 576–578 (SLY) constitute an intramembrane region (helical). Chloride is bound at residue Tyr-578. At 579 to 988 (DSIIQVKKLP…DEEDEDELIL (410 aa)) the chain is on the cytoplasmic side. A CBS 1 domain is found at 609–668 (MVRDVKFVSASYTYGELRTLLQTTTVKTLPLVDSKDSMILLGSVERSELQALLQRHLCPE). The interval 713–764 (EDEDEDLSGKSELPPSLALHPSTTAPLSPEEPNGPLPGHKQQPEAPEPAGQR) is disordered. One can recognise a CBS 2 domain in the interval 821-876 (IDQSPFQLVEQTTLHKTHTLFSLLGLHLAYVTSMGKLRGVLALEELQKAIEGHTKS). The segment at 880-988 (LRPPLASFRN…DEEDEDELIL (109 aa)) is disordered. Phosphoserine is present on Ser-886. The span at 887-906 (FRNTTSTRKSTGAPPSSAEN) shows a compositional bias: polar residues. Residues 929-941 (TPVPSPSPEPPLS) show a composition bias toward pro residues. Acidic residues-rich tracts occupy residues 950 to 967 (ELEE…EELA) and 979 to 988 (DEEDEDELIL).

Belongs to the chloride channel (TC 2.A.49) family. ClC-1/CLCN1 subfamily. As to quaternary structure, homodimer. As to expression, predominantly expressed in skeletal muscles.

The protein resides in the cell membrane. It is found in the sarcolemma. Its subcellular location is the T-tubule. The catalysed reaction is chloride(in) = chloride(out). It catalyses the reaction thiocyanate(in) = thiocyanate(out). The enzyme catalyses bromide(in) = bromide(out). It carries out the reaction nitrate(in) = nitrate(out). The catalysed reaction is iodide(out) = iodide(in). Modulated by membrane voltage with depolarization favouring channel opening and hyperpolarization favouring channel closure. Inhibited by acidic pH and ATP binding due to a shift of voltage dependence of common gating to more positive voltages. Inhibited by 9-anthracene-carboxylic. Voltage-gated chloride channel involved in skeletal muscle excitability. Generates most of the plasma membrane chloride conductance in skeletal muscle fibers, stabilizes the resting membrane potential and contributes to the repolarization phase during action potential firing. Forms a homodimeric channel where each subunit has its own ion conduction pathway. Conducts double-barreled currents controlled by two types of gates, two fast glutamate gates that control each subunit independently and a slow common gate that opens and shuts off both subunits simultaneously. Has a significant open probability at muscle resting potential and is further activated upon membrane depolarization. Permeable to small monovalent anions with ion selectivity for chloride &gt; thiocyanate &gt; bromide &gt; nitrate &gt; iodide. In Homo sapiens (Human), this protein is Chloride channel protein 1.